The primary structure comprises 267 residues: 4-hydroxy-tetrahydrodipicolinate reductase (267 aa).

Residue 11–16 (GAAGRM) coordinates NAD(+). An NADP(+)-binding site is contributed by R39. NAD(+)-binding positions include 100–102 (GTT) and 126–129 (APNF). H156 acts as the Proton donor/acceptor in catalysis. Residue H157 coordinates (S)-2,3,4,5-tetrahydrodipicolinate. K160 functions as the Proton donor in the catalytic mechanism. 166–167 (GT) serves as a coordination point for (S)-2,3,4,5-tetrahydrodipicolinate.

It belongs to the DapB family.

The protein resides in the cytoplasm. The catalysed reaction is (S)-2,3,4,5-tetrahydrodipicolinate + NAD(+) + H2O = (2S,4S)-4-hydroxy-2,3,4,5-tetrahydrodipicolinate + NADH + H(+). It catalyses the reaction (S)-2,3,4,5-tetrahydrodipicolinate + NADP(+) + H2O = (2S,4S)-4-hydroxy-2,3,4,5-tetrahydrodipicolinate + NADPH + H(+). It participates in amino-acid biosynthesis; L-lysine biosynthesis via DAP pathway; (S)-tetrahydrodipicolinate from L-aspartate: step 4/4. Its function is as follows. Catalyzes the conversion of 4-hydroxy-tetrahydrodipicolinate (HTPA) to tetrahydrodipicolinate. This is 4-hydroxy-tetrahydrodipicolinate reductase from Moorella thermoacetica (strain ATCC 39073 / JCM 9320).